A 188-amino-acid polypeptide reads, in one-letter code: uncharacterized protein (188 aa).

Positions 1–23 (MFKGQKTLAALAVSLLFTAPVYA) are cleaved as a signal peptide. An intrachain disulfide couples C42 to C81.

It belongs to the fimbrial protein family.

It is found in the fimbrium. This is an uncharacterized protein from Escherichia coli (strain K12).